The sequence spans 502 residues: Tubulin gamma chain (502 aa).

The segment covering 51-68 has biased composition (polar residues); sequence ELNNSGSSPQSYPQQTKP. Residues 51–73 are disordered; sequence ELNNSGSSPQSYPQQTKPNGKYR. GTP is bound at residue 169 to 175; it reads AGGTGSG. Acidic residues predominate over residues 473–482; it reads DDEDDLEDGD. Residues 473–502 are disordered; sequence DDEDDLEDGDGGGGGNGNGYNNIDDADMGI.

This sequence belongs to the tubulin family.

Its subcellular location is the cytoplasm. The protein resides in the cytoskeleton. It localises to the microtubule organizing center. The protein localises to the spindle pole body. Tubulin is the major constituent of microtubules. The gamma chain is found at microtubule organizing centers (MTOC) such as the spindle poles or the centrosome, suggesting that it is involved in the minus-end nucleation of microtubule assembly. In Candida albicans (Yeast), this protein is Tubulin gamma chain (TUB4).